The following is a 452-amino-acid chain: Matrilin-3 (452 aa).

A signal peptide spans 1–24 (MRRALGTLGCCLALLLPLLPAARG). The VWFA domain occupies 54-229 (DLVFIIDSSR…GVIEKLTSKF (176 aa)). EGF-like domains are found at residues 235 to 275 (AANT…RTCS), 276 to 316 (AVDV…KTCS), 317 to 357 (AMDV…KTCS), and 358 to 398 (AVDV…KTCS). 12 cysteine pairs are disulfide-bonded: cysteine 239–cysteine 250, cysteine 246–cysteine 259, cysteine 261–cysteine 274, cysteine 280–cysteine 291, cysteine 287–cysteine 300, cysteine 302–cysteine 315, cysteine 321–cysteine 332, cysteine 328–cysteine 341, cysteine 343–cysteine 356, cysteine 362–cysteine 373, cysteine 369–cysteine 382, and cysteine 384–cysteine 397. N-linked (GlcNAc...) asparagine glycosylation occurs at asparagine 295. Residues 419–451 (ALQDSVTSRLEALSTKLDEVSQKLQAYQDRQQV) adopt a coiled-coil conformation.

Can form homooligomers (monomers, dimers, trimers and tetramers) and heterooligomers with matrilin-1. As to expression, expression is restricted to cartilaginous tissues.

The protein resides in the secreted. Major component of the extracellular matrix of cartilage and may play a role in the formation of extracellular filamentous networks. This Gallus gallus (Chicken) protein is Matrilin-3 (MATN3).